Consider the following 326-residue polypeptide: Cell surface glycoprotein CD200 receptor 1 (326 aa).

The first 25 residues, 1-25, serve as a signal peptide directing secretion; it reads MFCFWRTSALAVLLIWGVFVAGSSC. The Extracellular segment spans residues 26-238; that stretch reads TDKNQTTQNN…SRGGNQSLRP (213 aa). Residues Asn-29, Asn-34, Asn-35, Asn-44, Asn-93, Asn-101, Asn-159, Asn-192, Asn-207, Asn-221, and Asn-233 are each glycosylated (N-linked (GlcNAc...) asparagine). The 86-residue stretch at 51–136 folds into the Ig-like V-type domain; that stretch reads IGTKALLCCF…YTCETVTPEG (86 aa). Disulfide bonds link Cys-58-Cys-129 and Cys-82-Cys-97. In terms of domain architecture, Ig-like C2-type spans 138–229; it reads FEKNYDLQVL…GNQSLSIELS (92 aa). 2 disulfide bridges follow: Cys-164–Cys-213 and Cys-183–Cys-201. A helical transmembrane segment spans residues 239 to 259; that stretch reads YIPYIIPSIIILIIIGCICLL. Residues 260 to 326 are Cytoplasmic-facing; sequence KISGFRKCKL…DCLTLSAIGI (67 aa).

The protein belongs to the CD200R family. In terms of assembly, CD200 and CD200R1 interact via their respective N-terminal Ig-like domains. Expressed in granulocytes, monocytes, most T-cells and a subset of NK, NKT and B-cells (at protein level). Expressed in the spleen, lung, liver, testis, bone marrow, lymph nodes, spinal cord, kidney, uterus and small intestine. Expressed in mast and dendritic cells. Expressed in the lung of N.brasiliensis-infected mice.

It localises to the cell membrane. Inhibitory receptor for the CD200/OX2 cell surface glycoprotein. Limits inflammation by inhibiting the expression of pro-inflammatory molecules including TNF-alpha, interferons, and inducible nitric oxide synthase (iNOS) in response to selected stimuli. The polypeptide is Cell surface glycoprotein CD200 receptor 1 (Cd200r1) (Mus musculus (Mouse)).